We begin with the raw amino-acid sequence, 313 residues long: MMENYKHTTVLLDEAVNGLNIRPDGIYIDGTFGRGGHSRLILSQFGEEGRLLAIDRDPQAIAVAKTIDDPRFSIIHGPFSALGDYVAERDLIGKIDGILLDLGVSSPQLDDAERGFSFMRDGPLDMRMDPTRGQSAAEWLQTAEEADIAWVLKTYGEERFAKRIARAIVERNREQPMTRTKELAEVVAAATPVKDKFKHPATRTFQAVRIWVNSELEEIEQALKSSLNVLAPGGRLSIISFHSLEDRIVKRFMRENSRGPQVPAGLPMTEEQLKKLGGRQLRALGKLMPGEEEVAENPRARSSVLRIAERTNA.

Residues 35-37, D55, F79, D101, and Q108 each bind S-adenosyl-L-methionine; that span reads GGH.

The protein belongs to the methyltransferase superfamily. RsmH family.

The protein localises to the cytoplasm. It catalyses the reaction cytidine(1402) in 16S rRNA + S-adenosyl-L-methionine = N(4)-methylcytidine(1402) in 16S rRNA + S-adenosyl-L-homocysteine + H(+). In terms of biological role, specifically methylates the N4 position of cytidine in position 1402 (C1402) of 16S rRNA. The protein is Ribosomal RNA small subunit methyltransferase H of Escherichia coli O7:K1 (strain IAI39 / ExPEC).